The primary structure comprises 334 residues: Ornithine carbamoyltransferase (334 aa).

Carbamoyl phosphate is bound by residues 56-59 (STRT), Q83, R107, and 134-137 (HPTQ). L-ornithine-binding positions include N168, D232, and 236–237 (SM). Carbamoyl phosphate is bound by residues 274–275 (CL) and R320.

This sequence belongs to the aspartate/ornithine carbamoyltransferase superfamily. OTCase family.

Its subcellular location is the cytoplasm. The enzyme catalyses carbamoyl phosphate + L-ornithine = L-citrulline + phosphate + H(+). It functions in the pathway amino-acid biosynthesis; L-arginine biosynthesis; L-arginine from L-ornithine and carbamoyl phosphate: step 1/3. Its function is as follows. Reversibly catalyzes the transfer of the carbamoyl group from carbamoyl phosphate (CP) to the N(epsilon) atom of ornithine (ORN) to produce L-citrulline. In Escherichia coli O157:H7, this protein is Ornithine carbamoyltransferase.